A 749-amino-acid chain; its full sequence is 5-methyltetrahydropteroyltriglutamate--homocysteine methyltransferase (749 aa).

Residues 15-18 (RELK) and lysine 114 contribute to the 5-methyltetrahydropteroyltri-L-glutamate site. L-homocysteine is bound by residues 425 to 427 (IGS) and glutamate 478. L-methionine is bound by residues 425–427 (IGS) and glutamate 478. Tryptophan 555 is a 5-methyltetrahydropteroyltri-L-glutamate binding site. Residue aspartate 593 coordinates L-homocysteine. Aspartate 593 lines the L-methionine pocket. Position 599 (glutamate 599) interacts with 5-methyltetrahydropteroyltri-L-glutamate. Zn(2+) contacts are provided by histidine 636, cysteine 638, and glutamate 660. The Proton donor role is filled by histidine 689. Cysteine 721 is a binding site for Zn(2+).

Belongs to the vitamin-B12 independent methionine synthase family. The cofactor is Zn(2+).

It catalyses the reaction 5-methyltetrahydropteroyltri-L-glutamate + L-homocysteine = tetrahydropteroyltri-L-glutamate + L-methionine. It functions in the pathway amino-acid biosynthesis; L-methionine biosynthesis via de novo pathway; L-methionine from L-homocysteine (MetE route): step 1/1. Catalyzes the transfer of a methyl group from 5-methyltetrahydrofolate to homocysteine resulting in methionine formation. In Streptococcus pneumoniae serotype 19F (strain G54), this protein is 5-methyltetrahydropteroyltriglutamate--homocysteine methyltransferase.